A 935-amino-acid polypeptide reads, in one-letter code: UvrABC system protein A (935 aa).

31 to 38 (GLSGSGKS) contributes to the ATP binding site. Residues 254–281 (CFKCKMSFEELEPLSFSFNSPKGACESC) form a C4-type zinc finger. ABC transporter domains are found at residues 310 to 579 (IFGY…NNHS) and 599 to 931 (KEKH…KFLA). 631–638 (GVSGSGKS) is an ATP binding site. The segment at 731–757 (CEKCQGDGDIKIEMHFLPDVLVQCDSC) adopts a C4-type zinc-finger fold.

This sequence belongs to the ABC transporter superfamily. UvrA family. As to quaternary structure, forms a heterotetramer with UvrB during the search for lesions.

It is found in the cytoplasm. Functionally, the UvrABC repair system catalyzes the recognition and processing of DNA lesions. UvrA is an ATPase and a DNA-binding protein. A damage recognition complex composed of 2 UvrA and 2 UvrB subunits scans DNA for abnormalities. When the presence of a lesion has been verified by UvrB, the UvrA molecules dissociate. The chain is UvrABC system protein A from Helicobacter pylori (strain ATCC 700392 / 26695) (Campylobacter pylori).